The primary structure comprises 199 residues: 7-methyl-GTP pyrophosphatase (199 aa).

The Proton acceptor role is filled by Asp74.

This sequence belongs to the Maf family. YceF subfamily. It depends on a divalent metal cation as a cofactor.

The protein resides in the cytoplasm. The enzyme catalyses N(7)-methyl-GTP + H2O = N(7)-methyl-GMP + diphosphate + H(+). In terms of biological role, nucleoside triphosphate pyrophosphatase that hydrolyzes 7-methyl-GTP (m(7)GTP). May have a dual role in cell division arrest and in preventing the incorporation of modified nucleotides into cellular nucleic acids. In Cupriavidus metallidurans (strain ATCC 43123 / DSM 2839 / NBRC 102507 / CH34) (Ralstonia metallidurans), this protein is 7-methyl-GTP pyrophosphatase.